The sequence spans 2156 residues: Oxygen-regulated protein 1 (2156 aa).

Positions 1–19 (MSDTPSTGFSIIHPTSSEG) are enriched in polar residues. The tract at residues 1-25 (MSDTPSTGFSIIHPTSSEGQVPPPR) is disordered. Doublecortin domains lie at 36–118 (KRIS…VDLD) and 154–233 (RSLV…GNYD). Disordered stretches follow at residues 353–375 (VSKT…RTES), 666–686 (SSVA…SRYQ), 1438–1458 (DMEE…MTSS), and 1590–1621 (DWSD…TQEK).

As to quaternary structure, interacts (via the doublecortin domains) with microtubules. Interacts with RP1L1. Interacts with MAK. Expressed in retina. Not expressed in heart, brain, placenta, lung, liver, skeletal muscle, kidney, spleen and pancreas.

The protein localises to the cytoplasm. It is found in the cytoskeleton. It localises to the cilium axoneme. The protein resides in the cell projection. Its subcellular location is the cilium. The protein localises to the photoreceptor outer segment. In terms of biological role, microtubule-associated protein regulating the stability and length of the microtubule-based axoneme of photoreceptors. Required for the differentiation of photoreceptor cells, it plays a role in the organization of the outer segment of rod and cone photoreceptors ensuring the correct orientation and higher-order stacking of outer segment disks along the photoreceptor axoneme. This is Oxygen-regulated protein 1 (RP1) from Homo sapiens (Human).